A 387-amino-acid chain; its full sequence is Na(+)/H(+)-K(+) antiporter GerN (387 aa).

A run of 11 helical transmembrane segments spans residues 29-49 (PSVLGKLIVGIVIGPAVLGWI), 54-74 (LLTQLSNVGVILLMFMAGLET), 87-107 (LAVALGGIILPFVGGYVSGLV), 114-134 (NAVFLGLLLCATSVSISVQTL), 149-169 (LGAAVFDDILVVILLAFAMSF), 175-195 (VNLTMVILKKVVFFASIILIG), 219-239 (ALIICFSFAYFGELLGIAGII), 263-283 (PIAYAMFVPVFFVSIGMNITF), 290-310 (IWFILALTVIAVLTKLIGCGF), 324-344 (IIGAGMVSRGEVALIIAGTGL), and 347-367 (GLLAQDYFTAIVIVVILTTMI).

The protein belongs to the monovalent cation:proton antiporter 2 (CPA2) transporter (TC 2.A.37) family.

It localises to the membrane. In terms of biological role, na(+)/H(+) antiporter that extrudes sodium in exchange for external protons. Can also use potassium as a coupling ion, without completely replacing H(+). This Na(+)/H(+)-K(+) antiport is much more rapid than Na(+)/H(+) antiport. Can also extrude lithium. Important for the inosine-dependent germination of spores. The sequence is that of Na(+)/H(+)-K(+) antiporter GerN (gerN) from Bacillus cereus.